Here is a 339-residue protein sequence, read N- to C-terminus: Glycerol-3-phosphate dehydrogenase [NAD(P)+] (339 aa).

4 residues coordinate NADPH: serine 31, tryptophan 32, arginine 52, and lysine 122. Positions 122 and 152 each coordinate sn-glycerol 3-phosphate. Alanine 156 is an NADPH binding site. Sn-glycerol 3-phosphate contacts are provided by lysine 207, aspartate 260, serine 270, arginine 271, and asparagine 272. Lysine 207 (proton acceptor) is an active-site residue. Arginine 271 serves as a coordination point for NADPH. Glutamate 293 contributes to the NADPH binding site.

Belongs to the NAD-dependent glycerol-3-phosphate dehydrogenase family.

The protein resides in the cytoplasm. It catalyses the reaction sn-glycerol 3-phosphate + NAD(+) = dihydroxyacetone phosphate + NADH + H(+). The enzyme catalyses sn-glycerol 3-phosphate + NADP(+) = dihydroxyacetone phosphate + NADPH + H(+). The protein operates within membrane lipid metabolism; glycerophospholipid metabolism. In terms of biological role, catalyzes the reduction of the glycolytic intermediate dihydroxyacetone phosphate (DHAP) to sn-glycerol 3-phosphate (G3P), the key precursor for phospholipid synthesis. The chain is Glycerol-3-phosphate dehydrogenase [NAD(P)+] from Tropheryma whipplei (strain Twist) (Whipple's bacillus).